Here is a 348-residue protein sequence, read N- to C-terminus: Heat-inducible transcription repressor HrcA (348 aa).

It belongs to the HrcA family.

Negative regulator of class I heat shock genes (grpE-dnaK-dnaJ and groELS operons). Prevents heat-shock induction of these operons. The chain is Heat-inducible transcription repressor HrcA from Lacticaseibacillus casei (strain BL23) (Lactobacillus casei).